The primary structure comprises 265 residues: Mlc titration factor A (265 aa).

Positions 111, 148, 152, and 211 each coordinate Zn(2+).

Belongs to the MtfA family. As to quaternary structure, interacts with Mlc. The cofactor is Zn(2+).

The protein resides in the cytoplasm. In terms of biological role, involved in the modulation of the activity of the glucose-phosphotransferase system (glucose-PTS). Interacts with the transcriptional repressor Mlc, preventing its interaction with DNA and leading to the modulation of expression of genes regulated by Mlc, including ptsG, which encodes the PTS system glucose-specific EIICB component. Functionally, shows zinc-dependent metallopeptidase activity. The chain is Mlc titration factor A from Enterobacter sp. (strain 638).